Reading from the N-terminus, the 150-residue chain is Large ribosomal subunit protein bL9 (150 aa).

Belongs to the bacterial ribosomal protein bL9 family.

In terms of biological role, binds to the 23S rRNA. This is Large ribosomal subunit protein bL9 from Shewanella sp. (strain MR-4).